Consider the following 753-residue polypeptide: ATPase family gene 2 protein homolog B (753 aa).

N-acetylmethionine is present on methionine 1. Residues 1–189 are required for interaction with AFG2A and CINP; sequence MAPDSDPFPE…PRTRVSLGGE (189 aa). The disordered stretch occupies residues 171 to 203; it reads SPDPAGLVTPRTRVSLGGEPPSEAQPQPEVPLG. Residues 241-248 and 505-512 each bind ATP; these read GPPGVGKT and GPPGCAKT.

The protein belongs to the AAA ATPase family. AFG2 subfamily. In terms of assembly, part of the 55LCC heterohexameric ATPase complex composed at least of AIRIM, AFG2A, AFG2B and CINP. Associates with pre-60S ribosomal particles. In terms of tissue distribution, expressed in both neurons and glia during embryonic and adult stages of brain development.

The protein resides in the cytoplasm. It localises to the cytoskeleton. The protein localises to the spindle. It is found in the nucleus. The catalysed reaction is ATP + H2O = ADP + phosphate + H(+). With respect to regulation, in the context of 55LCC heterohexameric ATPase complex, the ATPase activity is stimulated by DNA binding and inhibited in presence of RNA. In terms of biological role, ATP-dependent chaperone part of the 55LCC heterohexameric ATPase complex which is chromatin-associated and promotes replisome proteostasis to maintain replication fork progression and genome stability. Required for replication fork progression, sister chromatid cohesion, and chromosome stability. The ATPase activity is specifically enhanced by replication fork DNA and is coupled to cysteine protease-dependent cleavage of replisome substrates in response to replication fork damage. Uses ATPase activity to process replisome substrates in S-phase, facilitating their proteolytic turnover from chromatin to ensure DNA replication and mitotic fidelity. Plays an essential role in the cytoplasmic maturation steps of pre-60S ribosomal particles by promoting the release of shuttling protein RSL24D1/RLP24 from the pre-ribosomal particles. This is ATPase family gene 2 protein homolog B from Homo sapiens (Human).